The sequence spans 167 residues: ATP synthase subunit b (167 aa).

The chain crosses the membrane as a helical span at residues 9 to 29 (ALPLGNMLFIIIAFLLLMLIL).

Belongs to the ATPase B chain family. As to quaternary structure, F-type ATPases have 2 components, F(1) - the catalytic core - and F(0) - the membrane proton channel. F(1) has five subunits: alpha(3), beta(3), gamma(1), delta(1), epsilon(1). F(0) has three main subunits: a(1), b(2) and c(10-14). The alpha and beta chains form an alternating ring which encloses part of the gamma chain. F(1) is attached to F(0) by a central stalk formed by the gamma and epsilon chains, while a peripheral stalk is formed by the delta and b chains.

It localises to the cell membrane. In terms of biological role, f(1)F(0) ATP synthase produces ATP from ADP in the presence of a proton or sodium gradient. F-type ATPases consist of two structural domains, F(1) containing the extramembraneous catalytic core and F(0) containing the membrane proton channel, linked together by a central stalk and a peripheral stalk. During catalysis, ATP synthesis in the catalytic domain of F(1) is coupled via a rotary mechanism of the central stalk subunits to proton translocation. Its function is as follows. Component of the F(0) channel, it forms part of the peripheral stalk, linking F(1) to F(0). The polypeptide is ATP synthase subunit b (Leuconostoc mesenteroides subsp. mesenteroides (strain ATCC 8293 / DSM 20343 / BCRC 11652 / CCM 1803 / JCM 6124 / NCDO 523 / NBRC 100496 / NCIMB 8023 / NCTC 12954 / NRRL B-1118 / 37Y)).